Here is a 431-residue protein sequence, read N- to C-terminus: Trigger factor (431 aa).

Residues 164–249 (GNIAVIDFKG…IKEIKVKELP (86 aa)) enclose the PPIase FKBP-type domain.

The protein belongs to the FKBP-type PPIase family. Tig subfamily.

It is found in the cytoplasm. It catalyses the reaction [protein]-peptidylproline (omega=180) = [protein]-peptidylproline (omega=0). Involved in protein export. Acts as a chaperone by maintaining the newly synthesized protein in an open conformation. Functions as a peptidyl-prolyl cis-trans isomerase. The chain is Trigger factor from Clostridium tetani (strain Massachusetts / E88).